Consider the following 185-residue polypeptide: Photosystem I assembly protein Ycf4 (185 aa).

The next 2 membrane-spanning stretches (helical) occupy residues 24–44 (YIIG…SISS) and 66–86 (IIMG…WYLV).

This sequence belongs to the Ycf4 family.

It is found in the cellular thylakoid membrane. Seems to be required for the assembly of the photosystem I complex. The protein is Photosystem I assembly protein Ycf4 of Prochlorococcus marinus (strain MIT 9301).